The following is a 690-amino-acid chain: Probable serine/threonine-protein kinase drkB (690 aa).

The first 24 residues, 1–24 (MKVQIVFFSITVFIFVLFLLSVES), serve as a signal peptide directing secretion. A disordered region spans residues 51 to 110 (DSKSSEHTTSSSSSSNSKNKGDSSSSSSNSGSSSNSIISGDSNSKDAPTTSSDSLSPATP). The segment covering 57-96 (HTTSSSSSSNSKNKGDSSSSSSNSGSSSNSIISGDSNSKD) has biased composition (low complexity). A compositionally biased stretch (polar residues) spans 97-107 (APTTSSDSLSP). Residues Asn-134, Asn-180, Asn-220, and Asn-250 are each glycosylated (N-linked (GlcNAc...) asparagine). Residues 287–335 (TITPTPTITPTPTITPTVTPTATPSTTPSTTPTTTPSTPTPTPTKSPYS) form a disordered region. Residues 296 to 323 (PTPTITPTVTPTATPSTTPSTTPTTTPS) show a composition bias toward low complexity. The helical transmembrane segment at 346–366 (IIIASSITGGLLISIFSFVFI) threads the bilayer. Residues 391-644 (IKIGVRIGKG…EQCLEILESI (254 aa)) form the Protein kinase domain. ATP-binding positions include 397 to 405 (IGKGNFGEV) and Lys-418. Catalysis depends on Asp-514, which acts as the Proton acceptor. Residues 649 to 690 (FDDIPVNNNNNNNSNNNENNNENNNNSDNNNNDINYSNRVIN) form a disordered region. A compositionally biased stretch (low complexity) spans 655 to 681 (NNNNNNNSNNNENNNENNNNSDNNNND).

Belongs to the protein kinase superfamily. TKL Ser/Thr protein kinase family.

The protein localises to the membrane. It catalyses the reaction L-seryl-[protein] + ATP = O-phospho-L-seryl-[protein] + ADP + H(+). The enzyme catalyses L-threonyl-[protein] + ATP = O-phospho-L-threonyl-[protein] + ADP + H(+). The chain is Probable serine/threonine-protein kinase drkB (drkB) from Dictyostelium discoideum (Social amoeba).